Reading from the N-terminus, the 351-residue chain is DNA polymerase IV (351 aa).

The UmuC domain occupies isoleucine 4 to glycine 185. Residues aspartate 8 and aspartate 103 each contribute to the Mg(2+) site. Residue glutamate 104 is part of the active site.

This sequence belongs to the DNA polymerase type-Y family. Monomer. Mg(2+) is required as a cofactor.

The protein resides in the cytoplasm. It catalyses the reaction DNA(n) + a 2'-deoxyribonucleoside 5'-triphosphate = DNA(n+1) + diphosphate. Its function is as follows. Poorly processive, error-prone DNA polymerase involved in untargeted mutagenesis. Copies undamaged DNA at stalled replication forks, which arise in vivo from mismatched or misaligned primer ends. These misaligned primers can be extended by PolIV. Exhibits no 3'-5' exonuclease (proofreading) activity. May be involved in translesional synthesis, in conjunction with the beta clamp from PolIII. This is DNA polymerase IV from Salmonella paratyphi B (strain ATCC BAA-1250 / SPB7).